The primary structure comprises 244 residues: Ribonuclease PH (244 aa).

Residues R86 and 124–126 (GTR) contribute to the phosphate site.

It belongs to the RNase PH family. Homohexameric ring arranged as a trimer of dimers.

The catalysed reaction is tRNA(n+1) + phosphate = tRNA(n) + a ribonucleoside 5'-diphosphate. Functionally, phosphorolytic 3'-5' exoribonuclease that plays an important role in tRNA 3'-end maturation. Removes nucleotide residues following the 3'-CCA terminus of tRNAs; can also add nucleotides to the ends of RNA molecules by using nucleoside diphosphates as substrates, but this may not be physiologically important. Probably plays a role in initiation of 16S rRNA degradation (leading to ribosome degradation) during starvation. The polypeptide is Ribonuclease PH (Glaesserella parasuis serovar 5 (strain SH0165) (Haemophilus parasuis)).